Reading from the N-terminus, the 72-residue chain is Heat shock factor-binding protein 1-like protein 1 (72 aa).

Residues 12–66 (DLLQNAAENLLQEVEEHFQALTATLNLRMEEMGNRIEDLQRNVDDLMAQAGIENS) adopt a coiled-coil conformation.

Belongs to the HSBP1 family.

The sequence is that of Heat shock factor-binding protein 1-like protein 1 (Hsbp1l1) from Rattus norvegicus (Rat).